We begin with the raw amino-acid sequence, 553 residues long: Hydroxylamine reductase (553 aa).

4 residues coordinate [2Fe-2S] cluster: cysteine 3, cysteine 6, cysteine 18, and cysteine 25. The hybrid [4Fe-2O-2S] cluster site is built by histidine 252, glutamate 276, cysteine 320, cysteine 408, cysteine 436, cysteine 461, glutamate 495, and lysine 497. Cysteine 408 carries the post-translational modification Cysteine persulfide.

This sequence belongs to the HCP family. It depends on [2Fe-2S] cluster as a cofactor. Requires hybrid [4Fe-2O-2S] cluster as cofactor.

The protein localises to the cytoplasm. It carries out the reaction A + NH4(+) + H2O = hydroxylamine + AH2 + H(+). In terms of biological role, catalyzes the reduction of hydroxylamine to form NH(3) and H(2)O. The polypeptide is Hydroxylamine reductase (Tolumonas auensis (strain DSM 9187 / NBRC 110442 / TA 4)).